A 944-amino-acid chain; its full sequence is MGPPPPLRRQRLLLPRPSRRRPPARLASGRRSSRPGSSWTWYATLIASLVWYPTVSSTTLEATVVSSTDGGATGQASGGGGGGAGDSTPSESPETSADTTVPRERVTGTEWVSNLTSERYPYRICSMSQGTDIVRFARTITCAPYDAKSVSTEGIMLIYKANIVPYTFDVFTYQKELFFQRSYAYIYTTYLLGNSREHVALPLWEVDAANIWNYCYSSYVRTIGTEQYVSYHQDSYRNETMWLIPEEYQSGNTRRYVTVKDQYHVYGSTWLYKETCSMNCIVTQTKAKSKYPYDYFALSSGLVVEASPFYDTVNGHTFHENRRKFHVREQYRMLERFGAVNAPVRVVPKMAFLERPDIVLAWEIKEPKNVTCHLALWETVNRAIRTEHATSFHFVSRGLTATFVTAKANETLYNNSRYDCIRDSANRTIDRVFREEYDGKYELDGDPVIFTTNGGLTVVWQGLRQKALAALSALAGIPGANGTTNHSRHRRDTAAIAAREHASDLTYAQLQFAYDTIRDYVNQAIGHIAEAWCLEQRRTGEMLHELSKINPSSMLTAIYDRPIAARLAGDVIALAKCVEVDQDTVQVQRDMRKFETSVDGTEEQGQFCYSRPVVLFRFVNSSETQYGQLGEDNEILLGTFRTEACQLPSLKIFVAGKVAYEYRDYLYKRQIDLDSIDVVNTMISLKVEPLENTDFQVLELYSRGELKSANVFDLEDIMREYNAHKLRLRYITSKIVNPIPPFMRGLDDFMSGLGAAGKGLGLVLGAVGGAVASVVGGFVSFFTNPFGSLTLIILVVAVVVIVFLLYQRQRSAVRQPLDFFFPYLAQQTQRHQQTVTTTEYLDSPPPYAERDSYKSGPPDPAAEGLGGSGALPGSSATAATKYTTEDAWQMLLAIRRLDEEKREVPTMVAPSARPPSQQGPGLLDRIRRRGYRRLRDTGSDSELA.

Disordered stretches follow at residues 1–37 (MGPP…RPGS) and 68–108 (TDGG…RVTG). Residues 1 to 55 (MGPPPPLRRQRLLLPRPSRRRPPARLASGRRSSRPGSSWTWYATLIASLVWYPTV) form the signal peptide. The span at 24 to 37 (ARLASGRRSSRPGS) shows a compositional bias: low complexity. Residues 56–785 (SSTTLEATVV…GGFVSFFTNP (730 aa)) are Virion surface-facing. The span at 71–85 (GATGQASGGGGGGAG) shows a compositional bias: gly residues. The segment covering 89–99 (PSESPETSADT) has biased composition (polar residues). Residue asparagine 114 is glycosylated (N-linked (GlcNAc...) asparagine; by host). Disulfide bonds link cysteine 125–cysteine 577, cysteine 142–cysteine 533, cysteine 215–cysteine 280, cysteine 372–cysteine 420, and cysteine 608–cysteine 645. An involved in fusion and/or binding to host membrane region spans residues 182 to 188 (SYAYIYT). An N-linked (GlcNAc...) asparagine; by host glycan is attached at asparagine 238. The interval 267–274 (GSTWLYKE) is involved in fusion and/or binding to host membrane. N-linked (GlcNAc...) asparagine; by host glycans are attached at residues asparagine 369, asparagine 409, asparagine 414, asparagine 426, asparagine 481, asparagine 485, and asparagine 620. Hydrophobic membrane proximal region stretches follow at residues 731-783 (ITSK…SFFT) and 762-782 (LVLG…VSFF). A helical transmembrane segment spans residues 786-806 (FGSLTLIILVVAVVVIVFLLY). The Intravirion segment spans residues 807 to 944 (QRQRSAVRQP…RDTGSDSELA (138 aa)). 2 disordered regions span residues 834 to 878 (TVTT…SATA) and 902 to 944 (REVP…SELA). An Internalization motif motif is present at residues 931–934 (YRRL).

The protein belongs to the herpesviridae glycoprotein B family. In terms of assembly, homotrimer; disulfide-linked. Binds to heparan sulfate proteoglycans. Interacts with gH/gL heterodimer. A proteolytic cleavage by host furin generates two subunits that remain linked by disulfide bonds.

It localises to the virion membrane. Its subcellular location is the host cell membrane. It is found in the host endosome membrane. The protein resides in the host Golgi apparatus membrane. Its function is as follows. Envelope glycoprotein that forms spikes at the surface of virion envelope. Essential for the initial attachment to heparan sulfate moieties of the host cell surface proteoglycans. Involved in fusion of viral and cellular membranes leading to virus entry into the host cell. Following initial binding to its host receptors, membrane fusion is mediated by the fusion machinery composed at least of gB and the heterodimer gH/gL. May be involved in the fusion between the virion envelope and the outer nuclear membrane during virion egress. In Tupaiid herpesvirus (strain 2) (TuHV-2), this protein is Envelope glycoprotein B.